The primary structure comprises 367 residues: Peptide chain release factor 2 (367 aa).

Glutamine 254 is subject to N5-methylglutamine.

This sequence belongs to the prokaryotic/mitochondrial release factor family. In terms of processing, methylated by PrmC. Methylation increases the termination efficiency of RF2.

It localises to the cytoplasm. Its function is as follows. Peptide chain release factor 2 directs the termination of translation in response to the peptide chain termination codons UGA and UAA. The chain is Peptide chain release factor 2 from Neisseria gonorrhoeae (strain ATCC 700825 / FA 1090).